The following is a 900-amino-acid chain: MIGLRSISKNKQTINSISKSFYCTSSPSSSSVKLSVTRLIDGYRAHGHLAANIDPLARMERIRSQLLDLDRYNLVKGQSIPSTIDLINQDLTNLDQVVSFLENAYCNDVTAQFDHIESIEEKAWLYEKFEQLQHQNPSKSEKINILKNLIKSEIFDQFMQKKFPTFKRYGLEGNESMMVSCDSIFRESAKNQLKNVVIGMPHRGRLNLLVQMCNYPAKDFFWKVKGNSEFSEGILGVGDVTSHIAVSTDLQFNNNKESVHVSLIHNPSHLEAVDPVAAGKTRAKQFYEKNEGGSESLCLMLHGDAAVAGQGVVTETLQLSQLSGFNIGGCVHVIVNNQIGFTTVPTNGRSNRYSSDIGKFIGAPIIVVNSQSPEQVEKVSRLAVEYRQKFKKDIIIDLIGWRKFGHNEVDEPSFTQPTMYQNIRKRQSIPQKYATQIISQGIFSEQELLEFTQKEQAILEEQFQLSTPENFKYSPMDHLQGKWSGLIQSKHIADDSKLDTGYSVEELSEIANDSVKVPSDFQVHQRLLRSFSNARLEKLKQNQADWATAESMAVGSLMKQGYNVRISGQDVGRGTFSQRHFNLTEQNSDRIYQPLNNMGAKGELDVVNSNLSEFAVLCYEYGYSLESPDTLPIWEAQFGDFINGAQIAIDQFVTSGESKWLRQSGIVILLPHGFDGAGPEHSSCRIERFLQLSDTEAVNVKDDTLINQETNFYFINPSTPANYFHALRRQMIRNYRKPLIVAGPKVLLRHPNCFSTLNEMAPGTHFQTVLSDPDTINNASTIKRVIFCSGKVFYDLQEERKAKNFNDVAIIRLEQIAPFPYQRIQEEINRYSNATKFAWVQEEQQNGGCWSFVEPRFKQRYPQTSQIKYIGRPPLAASAIGISSIHKKEVSQLLIDAFNF.

This sequence belongs to the alpha-ketoglutarate dehydrogenase family. Requires thiamine diphosphate as cofactor.

It localises to the mitochondrion. The catalysed reaction is N(6)-[(R)-lipoyl]-L-lysyl-[protein] + 2-oxoadipate + H(+) = N(6)-[(R)-S(8)-glutaryldihydrolipoyl]-L-lysyl-[protein] + CO2. In terms of biological role, 2-oxoadipate dehydrogenase (E1a) component of the 2-oxoadipate dehydrogenase complex (OADHC). Participates in the first step, rate limiting for the overall conversion of 2-oxoadipate (alpha-ketoadipate) to glutaryl-CoA and CO(2) catalyzed by the whole OADHC. Catalyzes the irreversible decarboxylation of 2-oxoadipate via the thiamine diphosphate (ThDP) cofactor and subsequent transfer of the decarboxylated acyl intermediate on an oxidized dihydrolipoyl group that is covalently amidated to the E2 enzyme (dihydrolipoyllysine-residue succinyltransferase or DLST). The polypeptide is Probable 2-oxoadipate dehydrogenase complex component E1 homolog (odhA) (Dictyostelium discoideum (Social amoeba)).